A 126-amino-acid polypeptide reads, in one-letter code: Large ribosomal subunit protein bL17 (126 aa).

This sequence belongs to the bacterial ribosomal protein bL17 family. In terms of assembly, part of the 50S ribosomal subunit. Contacts protein L32.

The chain is Large ribosomal subunit protein bL17 from Aliivibrio fischeri (strain ATCC 700601 / ES114) (Vibrio fischeri).